A 261-amino-acid chain; its full sequence is Dienlactone hydrolase 1 (261 aa).

Catalysis depends on residues cysteine 147, aspartate 194, and histidine 226.

The protein belongs to the dienelactone hydrolase family.

It functions in the pathway xenobiotic degradation. Dienlactone hydrolase; part of the Fusarium detoxification of benzoxazolinone cluster 1 (FDB1) involved in the degradation of benzoxazolinones produced by the host plant. Maize, wheat, and rye produce the 2 benzoxazinone phytoanticipins 2,4-dihy-droxy-7-methoxy-1,4-benzoxazin-3-one (DIMBOA) and 2,4-dihydroxy-1,4-benzoxazin-3-one (DIBOA) that, due to their inherent instability once released, spontaneously degrade to the more stable corresponding benzoxazolinones, 6-methoxy-2-benzoxazolinone (MBOA) and 2-benzoxazolinone (BOA), respectively. The first step in the detoxification of benzoxazolinones involves the hydrolysis of the cyclic ester bond of benzoxazolinones by the FDB1 cluster gamma-lactamase MBL1 to aminophenols. MBL1 is able to convert BOA into 2-aminophenol (2-AP), as well as MBOA into 5-methoxy-2-aminophenol (2-AMP). The FDB2 cluster N-malonyltransferase FDB2/NAT1 then metabolizes aminophenols via N-malonylation to non-toxic malonamic acids. FDB2/NAT1 converts 2-AP into N-(2-hydroxyphenyl) malonamic acid (HPMA) and 2-AMP into N-(2-hydroxy-4-methoxyphenyl) malonamic acid (HMPMA). The duplicated dienlactone hydrolases DLH1 and DLH2 may provide redundant function for hydrolyzing the lactone moiety in the BOA molecule. The roles of the amidases and other enzymes encoded by the 2 FDB clusters have not been identified so far. The polypeptide is Dienlactone hydrolase 1 (Gibberella moniliformis (strain M3125 / FGSC 7600) (Maize ear and stalk rot fungus)).